The sequence spans 763 residues: Phosphoglycerol transferase I (763 aa).

A run of 4 helical transmembrane segments spans residues 4-19, 26-48, 76-98, and 110-132; these read LLSVALFLASVLIYAW, WWFAATLTVLGLFVILNITLYAS, YILPGIGIALALVAVFGALGWVL, and YSLLALLLALGSVDASPAFRQIT.

The protein belongs to the OpgB family.

Its subcellular location is the cell inner membrane. It catalyses the reaction a phosphatidylglycerol + a membrane-derived-oligosaccharide D-glucose = a 1,2-diacyl-sn-glycerol + a membrane-derived-oligosaccharide 6-(glycerophospho)-D-glucose.. The protein operates within glycan metabolism; osmoregulated periplasmic glucan (OPG) biosynthesis. Its function is as follows. Transfers a phosphoglycerol residue from phosphatidylglycerol to the membrane-bound nascent glucan backbones. The sequence is that of Phosphoglycerol transferase I from Salmonella typhi.